A 349-amino-acid chain; its full sequence is Nuclear distribution protein nudE homolog 1 (349 aa).

Residues 23-189 (AMKYKTCSEE…ELAVQQKQEK (167 aa)) are a coiled coil. Residues 182 to 201 (AVQQKQEKPKSNMGSPETER) form a disordered region.

The protein belongs to the nudE family. As to quaternary structure, self-associates. Interacts with pafah1b1. Phosphorylated in mitosis.

The protein localises to the cytoplasm. The protein resides in the cytoskeleton. It is found in the microtubule organizing center. Its subcellular location is the centrosome. It localises to the spindle. The protein localises to the chromosome. The protein resides in the centromere. It is found in the kinetochore. Its subcellular location is the cleavage furrow. It localises to the cytoplasmic vesicle membrane. In terms of biological role, required for centrosome duplication and formation and function of the mitotic spindle. In Xenopus tropicalis (Western clawed frog), this protein is Nuclear distribution protein nudE homolog 1 (nde1).